The sequence spans 681 residues: Pseudohemocyanin-2 (681 aa).

The first 21 residues, 1–21 (VLLCSLVAATAAWPYFGGFQR), serve as a signal peptide directing secretion. N98, N191, N228, and N624 each carry an N-linked (GlcNAc...) asparagine glycan.

Belongs to the tyrosinase family. Hemocyanin subfamily. As to quaternary structure, hexamer. Strongly expressed in ovaries. Also expressed in heart. Not detected in hepatopancreas, gills, connective tissue or muscle.

Functionally, does not function as a hemocyanin. This is Pseudohemocyanin-2 from Homarus americanus (American lobster).